Consider the following 37-residue polypeptide: Large ribosomal subunit protein bL36c (37 aa).

It belongs to the bacterial ribosomal protein bL36 family.

The protein localises to the plastid. It localises to the chloroplast. The polypeptide is Large ribosomal subunit protein bL36c (Lactuca sativa (Garden lettuce)).